A 309-amino-acid chain; its full sequence is Tagatose-6-phosphate kinase (309 aa).

This sequence belongs to the carbohydrate kinase PfkB family. LacC subfamily.

It catalyses the reaction D-tagatofuranose 6-phosphate + ATP = D-tagatofuranose 1,6-bisphosphate + ADP + H(+). It participates in carbohydrate metabolism; D-tagatose 6-phosphate degradation; D-glyceraldehyde 3-phosphate and glycerone phosphate from D-tagatose 6-phosphate: step 1/2. The protein is Tagatose-6-phosphate kinase of Streptococcus pyogenes serotype M2 (strain MGAS10270).